The primary structure comprises 153 residues: UPF0260 protein YcgN (153 aa).

Belongs to the UPF0260 family.

This chain is UPF0260 protein YcgN, found in Salmonella dublin (strain CT_02021853).